A 335-amino-acid chain; its full sequence is Aspartate carbamoyltransferase catalytic subunit (335 aa).

Positions 54 and 55 each coordinate carbamoyl phosphate. Lys-82 contacts L-aspartate. Carbamoyl phosphate is bound by residues Arg-104, His-134, and Gln-137. L-aspartate-binding residues include Arg-177 and Arg-232. Carbamoyl phosphate contacts are provided by Gly-277 and Pro-278.

It belongs to the aspartate/ornithine carbamoyltransferase superfamily. ATCase family. As to quaternary structure, heterododecamer (2C3:3R2) of six catalytic PyrB chains organized as two trimers (C3), and six regulatory PyrI chains organized as three dimers (R2).

It carries out the reaction carbamoyl phosphate + L-aspartate = N-carbamoyl-L-aspartate + phosphate + H(+). The protein operates within pyrimidine metabolism; UMP biosynthesis via de novo pathway; (S)-dihydroorotate from bicarbonate: step 2/3. Functionally, catalyzes the condensation of carbamoyl phosphate and aspartate to form carbamoyl aspartate and inorganic phosphate, the committed step in the de novo pyrimidine nucleotide biosynthesis pathway. The chain is Aspartate carbamoyltransferase catalytic subunit from Paenarthrobacter aurescens (strain TC1).